The primary structure comprises 98 residues: Cystatin-B (98 aa).

The residue at position 1 (M1) is an N-acetylmethionine. The short motif at Q46–G50 is the Secondary area of contact element.

Belongs to the cystatin family. Widely expressed. Highest expression in heart, liver and kidney. Lower levels in brain, lung and skeletal muscle. Lowest levels in spleen and testis.

Its subcellular location is the cytoplasm. Its function is as follows. This is an intracellular thiol proteinase inhibitor. The chain is Cystatin-B (Cstb) from Mus musculus (Mouse).